Here is a 579-residue protein sequence, read N- to C-terminus: General transcription and DNA repair factor IIH subunit TFB1-3 (579 aa).

2 BSD domains span residues 107 to 161 and 186 to 238; these read LTPA…GKDS and RTNR…YLYS.

It belongs to the TFB1 family. In terms of assembly, component of the 7-subunit TFIIH core complex composed of XPB, XPD, TFB1/GTF2H1, GTF2H2/P44, TFB4/GTF2H3, TFB2/GTF2H4 and TFB5/GTF2H5, which is active in NER. The core complex associates with the 3-subunit CDK-activating kinase (CAK) module composed of CYCH1/cyclin H1, CDKD and MAT1/At4g30820 to form the 10-subunit holoenzyme (holo-TFIIH) active in transcription.

It is found in the nucleus. Its function is as follows. Component of the general transcription and DNA repair factor IIH (TFIIH) core complex, which is involved in general and transcription-coupled nucleotide excision repair (NER) of damaged DNA and, when complexed to CAK, in RNA transcription by RNA polymerase II. In NER, TFIIH acts by opening DNA around the lesion to allow the excision of the damaged oligonucleotide and its replacement by a new DNA fragment. In transcription, TFIIH has an essential role in transcription initiation. When the pre-initiation complex (PIC) has been established, TFIIH is required for promoter opening and promoter escape. Phosphorylation of the C-terminal tail (CTD) of the largest subunit of RNA polymerase II by the kinase module CAK controls the initiation of transcription. The polypeptide is General transcription and DNA repair factor IIH subunit TFB1-3 (Arabidopsis thaliana (Mouse-ear cress)).